We begin with the raw amino-acid sequence, 7260 residues long: Nonribosomal peptide synthetase ecdA (7260 aa).

Positions 4–80 (TNEMERKRVF…ELFETIQYLQ (77 aa)) constitute a Carrier 1 domain. The residue at position 41 (Ser41) is an O-(pantetheine 4'-phosphoryl)serine. Positions 134–549 (EDVYPSTPLQ…SINEILTLPA (416 aa)) are condensation 1. Residues 575-965 (QDQVRSQPAA…DGSLLYVGRC (391 aa)) are adenylation 1. Positions 1090–1166 (APSTAIEHKL…DLARELEGRN (77 aa)) constitute a Carrier 2 domain. Ser1127 carries the O-(pantetheine 4'-phosphoryl)serine modification. The interval 1208 to 1628 (EDIIPCTAMQ…LGDLSLLSAD (421 aa)) is condensation 2. The segment at 1653-2054 (EEQITARPDS…GRRDTQIKIR (402 aa)) is adenylation 2. The Carrier 3 domain maps to 2188 to 2264 (TPSTPTESQL…DLANLLSSRF (77 aa)). Ser2225 is modified (O-(pantetheine 4'-phosphoryl)serine). A condensation 3 region spans residues 2314–2719 (QDVYPCTPLQ…THVVQQLCDP (406 aa)). An adenylation 3 region spans residues 2763–3156 (KQALAQPNAP…GRRDTQVKIR (394 aa)). A Carrier 4 domain is found at 3287–3365 (QPATEMEKML…ELAQVLEERV (79 aa)). Ser3324 is modified (O-(pantetheine 4'-phosphoryl)serine). A condensation 4 region spans residues 3417–3831 (VQDVYPCTPL…LLSPNDQQQI (415 aa)). An adenylation 4 region spans residues 3851-4248 (EEQAMAHPTK…SFVYVARRNT (398 aa)). A Carrier 5 domain is found at 4394-4471 (APATAMERTL…DLANLLADGA (78 aa)). Position 4431 is an O-(pantetheine 4'-phosphoryl)serine (Ser4431). Residues 4510 to 4910 (EDIYPATPLQ…HFVHVAEQLF (401 aa)) are condensation 5. An adenylation 5 region spans residues 4955-5357 (ERAALQPNAP…GRRDLQVKIR (403 aa)). Positions 5496-5573 (APRTVMEQQV…DLALVLSERG (78 aa)) constitute a Carrier 6 domain. At Ser5533 the chain carries O-(pantetheine 4'-phosphoryl)serine. The tract at residues 5622 to 6043 (EDVYPCTPLQ…AVSEKDERQI (422 aa)) is condensation 6. Residues 6063-6460 (QEQVARTPGE…GRHDSQVKIR (398 aa)) form an adenylation 6 region. The Carrier 7 domain occupies 6592-6668 (APSTAMERQL…EVAQVVEDRV (77 aa)). Ser6629 carries the post-translational modification O-(pantetheine 4'-phosphoryl)serine. The tract at residues 6718–7133 (LPTTDFQALT…ILDSPGLLVS (416 aa)) is condensation 7. Positions 7241–7260 (CEEAEKSASVTSSERRLATI) are disordered.

Belongs to the NRP synthetase family.

It participates in antifungal biosynthesis. Nonribosomal peptide synthetase; part of the gene cluster that mediates the biosynthesis of echinocandin B, a fungal lipidated cyclic hexapeptide that acts as an antifungal agent. Linoleoyl-AMP, produced by the fatty-acyl-AMP ligase ecdI, is transferred to the initiation carrier domain (T0) of ecdA. The linoleoyl-S-phosphopantetheinyl-T0 is sequentially extended with L-ornithine, L-threonine, L-proline, L-homotyrosine, L-threonine, and 4R-methyl-L-proline to form the linear hexapeptide. Thereafter, the terminal condensation (C7) performs macrocyclization of the NRPS product and the cyclic scaffold is released from ecdA. All six of the amino acid residues are hydroxylated, including 4R,5R-dihydroxy-L-ornithine, 4R-hydroxyl-L-proline, 3S,4S-dihydroxy-L-homotyrosine, and 3S-hydroxyl-4S-methyl-L-prolin. In the pathway, all the hydroxylation reactions are proposed to occur following completion of the cyclic peptide, so the unhydroxylated precursor produced by ecdA will undergo six rounds of hydroxylation. Five hydroxylase genes (ecdG, ecdH, ecdK, htyE and htyF) are embedded within the echinocandin B (ecd) and L-homotyrosine (hty) clusters. This is Nonribosomal peptide synthetase ecdA from Aspergillus rugulosus (Emericella rugulosa).